The following is a 37-amino-acid chain: Cytochrome b6-f complex subunit 5 (37 aa).

A helical transmembrane segment spans residues 5–25 (LLSGIVLGLIVVTLSGLFYAA).

The protein belongs to the PetG family. In terms of assembly, the 4 large subunits of the cytochrome b6-f complex are cytochrome b6, subunit IV (17 kDa polypeptide, PetD), cytochrome f and the Rieske protein, while the 4 small subunits are PetG, PetL, PetM and PetN. The complex functions as a dimer.

It is found in the cellular thylakoid membrane. Its function is as follows. Component of the cytochrome b6-f complex, which mediates electron transfer between photosystem II (PSII) and photosystem I (PSI), cyclic electron flow around PSI, and state transitions. PetG is required for either the stability or assembly of the cytochrome b6-f complex. The chain is Cytochrome b6-f complex subunit 5 from Trichormus variabilis (strain ATCC 29413 / PCC 7937) (Anabaena variabilis).